The following is a 378-amino-acid chain: MKGVIFCLVVLLWRQAWVSSKSHKCDFTKEKYLLSGEKEVSCEIDANPSDDITFICPNKIDSLCFHTVNISKNINQNKSTMSIQDLLYGSVVYGNTLFISPYVRTNTPFYCFCNLDTVTIQKFLKINRFLKDDDELSEADVMKHLKGGNVSEAQADEYLNKALNRFKKMKDLSKFFNDQADNTTKLNLPKSLNIPNDILNYDVYNSSNNRNDIVVKDEVTNKQIISKRGIMSVFVRSNNNVIKGCDFGNNNKNYFSHPISVAGKVNNKVCKIQGKPGELVGFKCAFEENGKVEPPNCFDQVLHKNKVTDLKTLIPGYASYTNKHSSKYPYYLKIPHFVNEQYTIQCKCKSNNSQNEYTFELDIQPGESEVVLNSFKTS.

The N-terminal stretch at 1–20 (MKGVIFCLVVLLWRQAWVSS) is a signal peptide. Residues 21–133 (KSHKCDFTKE…LKINRFLKDD (113 aa)) enclose the 6-Cys 1 domain. 3 disulfide bridges follow: cysteine 25–cysteine 42, cysteine 56–cysteine 113, and cysteine 64–cysteine 111. 4 N-linked (GlcNAc...) asparagine glycosylation sites follow: asparagine 77, asparagine 149, asparagine 182, and asparagine 205. Residues 241–375 (VIKGCDFGNN…GESEVVLNSF (135 aa)) form the 6-Cys 2 domain. 3 cysteine pairs are disulfide-bonded: cysteine 245–cysteine 270, cysteine 284–cysteine 348, and cysteine 297–cysteine 346. N-linked (GlcNAc...) asparagine glycosylation occurs at asparagine 351.

As to quaternary structure, heterodimer; heterodimerizes with PF12. May form an antiparallel heterodimer with PF12. Post-translationally, processed into a soluble form.

It is found in the cell surface. Its subcellular location is the cell membrane. This Plasmodium falciparum (isolate 3D7) protein is Merozoite surface protein P41 (PF41).